The sequence spans 142 residues: Ribosome-binding factor A (142 aa).

Positions 120–130 (EVRRDIDHAPA) are enriched in basic and acidic residues. A disordered region spans residues 120–142 (EVRRDIDHAPAEDEFPTDGDDGQ). Acidic residues predominate over residues 131–142 (EDEFPTDGDDGQ).

The protein belongs to the RbfA family. Monomer. Binds 30S ribosomal subunits, but not 50S ribosomal subunits or 70S ribosomes.

It is found in the cytoplasm. One of several proteins that assist in the late maturation steps of the functional core of the 30S ribosomal subunit. Associates with free 30S ribosomal subunits (but not with 30S subunits that are part of 70S ribosomes or polysomes). Required for efficient processing of 16S rRNA. May interact with the 5'-terminal helix region of 16S rRNA. The polypeptide is Ribosome-binding factor A (Paramagnetospirillum magneticum (strain ATCC 700264 / AMB-1) (Magnetospirillum magneticum)).